We begin with the raw amino-acid sequence, 803 residues long: MAENSEGLGTVPEHERILQEIESTDTACVGPTLRSVYDDQPNAHKKFMEKLDACIRNHDKEIEKMCNFHHQGFVDAITELLKVRTDAEKLKVQVTDTNRRFQDAGKEVIIQTEDIIRCRIQQRNITTVVENLQYAFPVLEMYSKLKEQMTAKRYYSALKTMEQLENVYFPRVSQYRFCQLMIENLPKLREDIKEISMSDLKDFLESIRKHSDKIGETAMKQAQQQKTFSVALQKQNNVKFGKNMYINDRIPEERKENELKQGFEEEDENEEEILTVQDLVDFSPVYRCLHIYSVLGDEETFENYYRKQRKKQARLVLQPQSNMHETVDGYRRYFTQIVGFFVVEDHILHVTQGLVTRAYTDELWNMALSKIIAVLRAHSSYCTDPDLVLELKNLIVIFADTLQGYGFPVNRLFDLLFEIRDQYNETLLKKWAGVFRDIFEEDNYSPIPIVNEEEYKAVISKFPFQDPDFEKQSFPKKFPMSQSVPHIYIQVKEFIYASLKFSESLHRSSTEIDDMLRKSTNLLLTRTLSSCLLNLIRKPHIGLTELVQIIINTTHLEQACKYLEDFITNITNISQETVHTTRLYGLSTFKDARHAAEGEIYTKLNQKIDEFVQLADYDWTMSEPDGRASGYLMDLINFLRSIFQVFTHLPGKVAQTACMSACQHLSTSLMQMLLDSELKQISMGAVQQFNLDVIQCELFASSEPVPGFQGDTLQLAFIDLRQLLDLFMVWDWSTYLADYGQPASKYLRVNPNTALTLLEKMKDTSKKNNIFAQFRKNDRDKQKLIETVVKQLRSLVNGMSQHT.

The protein belongs to the SEC15 family. The exocyst complex is composed of EXOC1, EXOC2, EXOC3, EXOC4, EXOC5, EXOC6, EXOC7 and EXOC8. Interacts with CNTRL. Interacts with RAB11A in a GTP-dependent manner.

It is found in the cytoplasm. Its subcellular location is the perinuclear region. The protein localises to the cell projection. The protein resides in the growth cone. It localises to the midbody. It is found in the midbody ring. Component of the exocyst complex involved in the docking of exocytic vesicles with fusion sites on the plasma membrane. Together with RAB11A, RAB3IP, RAB8A, PARD3, PRKCI, ANXA2, CDC42 and DNMBP promotes transcytosis of PODXL to the apical membrane initiation sites (AMIS), apical surface formation and lumenogenesis. The protein is Exocyst complex component 6 (EXOC6) of Canis lupus familiaris (Dog).